A 660-amino-acid polypeptide reads, in one-letter code: Probable rhamnogalacturonate lyase B (660 aa).

A signal peptide spans 1-20; the sequence is MRLSVSLGLASLWTAIGATA. N-linked (GlcNAc...) asparagine glycans are attached at residues Asn-22, Asn-27, Asn-109, Asn-142, Asn-238, Asn-284, Asn-432, Asn-492, Asn-532, Asn-594, and Asn-635.

It belongs to the polysaccharide lyase 4 family.

Its subcellular location is the secreted. It carries out the reaction Endotype eliminative cleavage of L-alpha-rhamnopyranosyl-(1-&gt;4)-alpha-D-galactopyranosyluronic acid bonds of rhamnogalacturonan I domains in ramified hairy regions of pectin leaving L-rhamnopyranose at the reducing end and 4-deoxy-4,5-unsaturated D-galactopyranosyluronic acid at the non-reducing end.. Pectinolytic enzymes consist of four classes of enzymes: pectin lyase, polygalacturonase, pectin methylesterase and rhamnogalacturonase. Degrades the rhamnogalacturonan I (RG-I) backbone of pectin. This Aspergillus terreus (strain NIH 2624 / FGSC A1156) protein is Probable rhamnogalacturonate lyase B (rglB).